A 463-amino-acid polypeptide reads, in one-letter code: MGKEKTHINIVVIGHVDSGKSTTTGHLIYKCGGIDKRTIEKFEKEAAEMGKGSFKYAWVLDKLKAERERGITIDISLWKFETTKYYITIIDAPGHRDFIKNMITGTSQADCAVLIVAAGVGEFEAGISKNGQTREHALLAYTLGVKQLIVGVNKMDSTEPAYSEKRYDEIVKEVSAYIKKIGYNPATVPFVPISGWHGDNMLEPSPNMPWFKGWKVERKEGNASGVSLLEALDTILPPTRPTDKPLRLPLQDVYKIGGIGTVPVGRVETGILRPGMVVTFAPVNITTEVKSVEMHHEALSEALPGDNVGFNVKNVSVKDIRRGNVCGDSKSDPPQEAAQFTSQVIILNHPGQISAGYSPVIDCHTAHIACKFAELKEKIDRRSGKKLEDNPKSLKSGDAAIVEMVPGKPMCVESFSQYPPLGRFAVRDMRQTVAVGVIKNVEKKSGGAGKVTKSAQKAQKAGK.

The residue at position 2 (glycine 2) is a N,N,N-trimethylglycine. The tr-type G domain maps to 5-242 (KTHINIVVIG…DTILPPTRPT (238 aa)). Positions 14 to 21 (GHVDSGKS) are G1. GTP is bound by residues aspartate 17, serine 18, glycine 19, lysine 20, serine 21, and threonine 22. Aspartate 17 contributes to the Mg(2+) binding site. The residue at position 36 (lysine 36) is an N6,N6,N6-trimethyllysine; alternate. At lysine 36 the chain carries N6,N6-dimethyllysine; alternate. Lysine 36 carries the post-translational modification N6-methyllysine; alternate. An N6,N6,N6-trimethyllysine modification is found at lysine 55. Residue lysine 55 is modified to N6,N6-dimethyllysine. The tract at residues 70–74 (GITID) is G2. N6,N6,N6-trimethyllysine is present on lysine 79. The tract at residues 91–94 (DAPG) is G3. GTP-binding residues include asparagine 153, lysine 154, and aspartate 156. The segment at 153 to 156 (NKMD) is G4. A Phosphoserine modification is found at serine 163. Lysine 165 is subject to N6,N6-dimethyllysine; alternate. An N6-methyllysine; alternate modification is found at lysine 165. N6,N6,N6-trimethyllysine; alternate; by EEF1AKMT3 is present on lysine 165. The residue at position 179 (lysine 179) is an N6-acetyllysine. 3 residues coordinate GTP: serine 194, glycine 195, and tryptophan 196. Residues 194–196 (SGW) form a G5 region. A Phosphoserine modification is found at serine 224. Threonine 239 carries the post-translational modification Phosphothreonine. Glutamate 301 and glutamate 374 each carry 5-glutamyl glycerylphosphorylethanolamine. At lysine 439 the chain carries N6-acetyllysine. The disordered stretch occupies residues 444-463 (KSGGAGKVTKSAQKAQKAGK).

It belongs to the TRAFAC class translation factor GTPase superfamily. Classic translation factor GTPase family. EF-Tu/EF-1A subfamily. Homodimer; arranged in a 'head to tail' dimer configuration. Post-translationally, trimethylated at Lys-165 by EEF1AKMT3. Mono-, di-, and trimethylated at Lys-36 by EEF1AKMT4; trimethylated form is predominant. Methylation by EEF1AKMT4 contributes to the fine-tuning of translation rates for a subset of tRNAs. Trimethylated at the N-terminus and dimethylated at Lys-55 by METTL13.

It localises to the endoplasmic reticulum membrane. The catalysed reaction is GTP + H2O = GDP + phosphate + H(+). In terms of biological role, translation elongation factor that catalyzes the GTP-dependent binding of aminoacyl-tRNA (aa-tRNA) to the A-site of ribosomes during the elongation phase of protein synthesis. Base pairing between the mRNA codon and the aa-tRNA anticodon promotes GTP hydrolysis, releasing the aa-tRNA from EEF1A1 and allowing its accommodation into the ribosome. The growing protein chain is subsequently transferred from the P-site peptidyl tRNA to the A-site aa-tRNA, extending it by one amino acid through ribosome-catalyzed peptide bond formation. This Bos taurus (Bovine) protein is Elongation factor 1-alpha 2 (EEF1A2).